A 199-amino-acid chain; its full sequence is NAD(P)H-quinone oxidoreductase subunit 6, chloroplastic (199 aa).

The next 5 membrane-spanning stretches (helical) occupy residues 13–33 (AILLLIESGVILGSLGVVLFT), 35–55 (IVYSAFLLGWVPVCISFLYIL), 64–84 (VQILIYVGTINVLIVFAVMLI), 96–118 (WTVGDGTALALCTSPFLSIIAAI), and 157–177 (LPFELLSIILLVAPVGAITMA).

The protein belongs to the complex I subunit 6 family. In terms of assembly, NDH is composed of at least 16 different subunits, 5 of which are encoded in the nucleus.

The protein resides in the plastid. It is found in the chloroplast thylakoid membrane. It carries out the reaction a plastoquinone + NADH + (n+1) H(+)(in) = a plastoquinol + NAD(+) + n H(+)(out). It catalyses the reaction a plastoquinone + NADPH + (n+1) H(+)(in) = a plastoquinol + NADP(+) + n H(+)(out). Its function is as follows. NDH shuttles electrons from NAD(P)H:plastoquinone, via FMN and iron-sulfur (Fe-S) centers, to quinones in the photosynthetic chain and possibly in a chloroplast respiratory chain. The immediate electron acceptor for the enzyme in this species is believed to be plastoquinone. Couples the redox reaction to proton translocation, and thus conserves the redox energy in a proton gradient. In Huperzia lucidula (Shining clubmoss), this protein is NAD(P)H-quinone oxidoreductase subunit 6, chloroplastic (ndhG).